The primary structure comprises 215 residues: Transcription factor LAX PANICLE 1 (215 aa).

The segment at 1-48 is disordered; it reads MHDPRGFPIHPQPYHLHPTAGGLGEGRMRGGGRRRPGAKLSTDPQSVA. Residues 40 to 53 are basic motif; degenerate; the sequence is LSTDPQSVAARERR. A bHLH domain is found at 40–89; the sequence is LSTDPQSVAARERRHRISDRFRVLRSLVPGGSKMDTVSMLEQAIHYVKFL. Residues 54-89 are helix-loop-helix motif; the sequence is HRISDRFRVLRSLVPGGSKMDTVSMLEQAIHYVKFL.

The protein belongs to the bHLH protein family. As to quaternary structure, efficient DNA binding requires dimerization with another bHLH protein. Interacts with LAX2. As to expression, expressed in the boundary between the shoot apical meristem (SAM) and the region of new meristem formation.

It is found in the nucleus. Its function is as follows. Transcription factor that seems to regulate organogenesis in postembryonic development. Involved in the regulation of shoot branching by controlling axillary meristem initiation. Functions in association with LAX2 to regulate the process of AM formation. Possesses transactivation activity in yeast. This chain is Transcription factor LAX PANICLE 1, found in Oryza sativa subsp. japonica (Rice).